A 73-amino-acid polypeptide reads, in one-letter code: DNA-directed RNA polymerase subunit omega (73 aa).

This sequence belongs to the RNA polymerase subunit omega family. As to quaternary structure, the RNAP catalytic core consists of 2 alpha, 1 beta, 1 beta' and 1 omega subunit. When a sigma factor is associated with the core the holoenzyme is formed, which can initiate transcription.

The catalysed reaction is RNA(n) + a ribonucleoside 5'-triphosphate = RNA(n+1) + diphosphate. Its function is as follows. Promotes RNA polymerase assembly. Latches the N- and C-terminal regions of the beta' subunit thereby facilitating its interaction with the beta and alpha subunits. The polypeptide is DNA-directed RNA polymerase subunit omega (Oleidesulfovibrio alaskensis (strain ATCC BAA-1058 / DSM 17464 / G20) (Desulfovibrio alaskensis)).